We begin with the raw amino-acid sequence, 140 residues long: Photosystem I reaction center subunit XI (140 aa).

A run of 3 helical transmembrane segments spans residues 48 to 68 (LEIG…LGPL), 79 to 99 (LLSA…YGAV), and 119 to 139 (SGFL…LTLF).

Belongs to the PsaL family.

The protein localises to the plastid. The protein resides in the chloroplast thylakoid membrane. This chain is Photosystem I reaction center subunit XI, found in Cyanidioschyzon merolae (strain NIES-3377 / 10D) (Unicellular red alga).